The primary structure comprises 197 residues: MIIGLTGGIASGKSTVVEIIKDARYKVIDADQLVHDMQVKGGRLYQALLDWLGYGILLPNGELNRPKLGQLIFSSEEMRYQSAEIQGKIIREELAAKRDCLAKEDDVFFMDIPLLFENDYQDWFDQIWLVAVSPQVQCQRLMKRNHLSAEEAGMRIASQMPLAEKLPYASLVIDNNGNIDDLKKKVKGAIKDLANLV.

In terms of domain architecture, DPCK spans 2–197; that stretch reads IIGLTGGIAS…GAIKDLANLV (196 aa). An ATP-binding site is contributed by 10 to 15; it reads ASGKST.

It belongs to the CoaE family.

The protein resides in the cytoplasm. The enzyme catalyses 3'-dephospho-CoA + ATP = ADP + CoA + H(+). The protein operates within cofactor biosynthesis; coenzyme A biosynthesis; CoA from (R)-pantothenate: step 5/5. Catalyzes the phosphorylation of the 3'-hydroxyl group of dephosphocoenzyme A to form coenzyme A. This is Dephospho-CoA kinase from Streptococcus thermophilus (strain CNRZ 1066).